The primary structure comprises 1039 residues: FERM domain-containing protein 4A (1039 aa).

Residues 20–322 (RRCQVHLLDD…SQHQFYLDRK (303 aa)) form the FERM domain. The tract at residues 358–420 (KGKIISGSSG…KLCLREAELT (63 aa)) is necessary for interaction with CYTH1. Positions 366–382 (SGSLLSSGSQESDSSQS) are enriched in low complexity. Positions 366–386 (SGSLLSSGSQESDSSQSAKKD) are disordered. The stretch at 382–416 (SAKKDMLAALKSRQEALEETLRQRLEELKKLCLRE) forms a coiled coil. Residue Ser-530 is modified to Phosphoserine. The interval 553 to 680 (DEDSQVTSTI…MPSTPDLRVR (128 aa)) is disordered. Positions 571–586 (GLPPRPPSHNRPPPPQ) are enriched in pro residues. The necessary for tight junction and adherens junction localization; Requires for interaction with PARD3 stretch occupies residues 579–939 (HNRPPPPQSL…QWYQRSTASH (361 aa)). Phosphoserine occurs at positions 604 and 615. Residues 623–638 (VKKRSSHSHSSSHKRF) show a composition bias toward basic residues. Phosphoserine occurs at positions 681 and 711. Disordered regions lie at residues 713–756 (ESQG…HSSS) and 772–813 (AEDS…AGGA). A compositionally biased stretch (low complexity) spans 788–800 (RAAGALGSASSGS). Phosphoserine is present on residues Ser-800, Ser-872, and Ser-901. 2 disordered regions span residues 879–968 (FKES…STFV) and 980–1039 (CKAT…STDE). Over residues 896-905 (LTPSRSQILR) the composition is skewed to polar residues. A compositionally biased stretch (basic and acidic residues) spans 912 to 929 (EGAHDKGAGRAAVSDELR). The span at 946–966 (SHTSSTSSDSGSQYSTSSQST) shows a compositional bias: low complexity. Polar residues-rich tracts occupy residues 986–1000 (ALPQ…SSEI) and 1013–1023 (TWQTGEATENS).

As to quaternary structure, interacts (via coiled-coil domain) with CYTH1 (via coiled-coil domain). Interacts with PARD3 (via coiled-coil domain). Found in a complex with PARD3, CYTH1 and FRMD4A. Interacts with CYTH2. Interacts with CYTH3.

It is found in the cytoplasm. It localises to the cytoskeleton. The protein resides in the cell junction. The protein localises to the adherens junction. Its subcellular location is the tight junction. Its function is as follows. Scaffolding protein that regulates epithelial cell polarity by connecting ARF6 activation with the PAR3 complex. Plays a redundant role with FRMD4B in epithelial polarization. May regulate MAPT secretion by activating ARF6-signaling. This chain is FERM domain-containing protein 4A, found in Homo sapiens (Human).